Consider the following 593-residue polypeptide: UvrABC system protein C (593 aa).

One can recognise a GIY-YIG domain in the interval 17–94; that stretch reads MEPGCYLMKD…IKQYQPRYNI (78 aa). The region spanning 199–234 is the UVR domain; it reads KTILKSLEERMLTASESLDFERAKEYRDLIQHIQNL.

The protein belongs to the UvrC family. As to quaternary structure, interacts with UvrB in an incision complex.

It is found in the cytoplasm. Functionally, the UvrABC repair system catalyzes the recognition and processing of DNA lesions. UvrC both incises the 5' and 3' sides of the lesion. The N-terminal half is responsible for the 3' incision and the C-terminal half is responsible for the 5' incision. The sequence is that of UvrABC system protein C from Staphylococcus aureus (strain USA300).